The sequence spans 89 residues: Small ribosomal subunit protein bS16 (89 aa).

It belongs to the bacterial ribosomal protein bS16 family.

In Anaplasma marginale (strain Florida), this protein is Small ribosomal subunit protein bS16.